A 235-amino-acid chain; its full sequence is Orotidine 5'-phosphate decarboxylase (235 aa).

Substrate contacts are provided by residues aspartate 17, lysine 39, 66 to 75, threonine 121, arginine 182, glutamine 191, glycine 211, and arginine 212; that span reads DLKLHDIGNT. Lysine 68 serves as the catalytic Proton donor.

The protein belongs to the OMP decarboxylase family. Type 1 subfamily. In terms of assembly, homodimer.

It catalyses the reaction orotidine 5'-phosphate + H(+) = UMP + CO2. The protein operates within pyrimidine metabolism; UMP biosynthesis via de novo pathway; UMP from orotate: step 2/2. Its function is as follows. Catalyzes the decarboxylation of orotidine 5'-monophosphate (OMP) to uridine 5'-monophosphate (UMP). In Rhodopseudomonas palustris (strain HaA2), this protein is Orotidine 5'-phosphate decarboxylase.